Here is a 305-residue protein sequence, read N- to C-terminus: Probable lipid kinase YegS-like (305 aa).

A DAGKc domain is found at 1-129; that stretch reads MTQRRAMLIL…VDLGEVGGKL (129 aa). Residues Thr-39, 65–71, and Thr-92 contribute to the ATP site; that span reads GDGTLRD. Leu-210, Asp-213, and Leu-215 together coordinate Mg(2+). The Proton acceptor role is filled by Glu-268.

The protein belongs to the diacylglycerol/lipid kinase family. YegS lipid kinase subfamily. It depends on Mg(2+) as a cofactor. Ca(2+) serves as cofactor.

It localises to the cytoplasm. Its function is as follows. Probably phosphorylates lipids; the in vivo substrate is unknown. This is Probable lipid kinase YegS-like from Pseudomonas syringae pv. syringae (strain B728a).